The sequence spans 534 residues: Hypothemycin biosynthesis cluster protein hpm4 (534 aa).

Disordered regions lie at residues 34-61 (IEPA…SDGP), 110-130 (LQSP…PLRL), and 236-287 (DGTG…KKCI). 2 stretches are compositionally biased toward low complexity: residues 112-127 (SPTT…SCAP) and 258-275 (TVSS…ACQT).

It participates in secondary metabolite biosynthesis. Part of the gene cluster that mediates the biosynthesis of hypothemycin, a resorcylic acid lactone (RAL) that irreversibly inhibits a subset of protein kinases with a conserved cysteine in the ATP binding site such as human ERK2. The first step is performed by both PKSs hmp3 and hmp8 and leads to the production of 7',8'-dehydrozearalenol (DHZ). The highly reducing PKS hpm8 synthesizes the reduced hexaketide (7S,11S,2E,8E)-7,11-dihydroxy-dodeca-2,8-dienoate, which is transferred downstream to the non-reducing PKS hpm3. Hpm3 then extends the reduced hexaketide to a nonaketide, after which regioselective cyclization and macrolactonization affords DHZ. The next step is the conversion of DHZ into aigialomycin C and is performed by the O-methyltransferase hmp5, the FAD-binding monooxygenase hmp7, and the cytochrome P450 monooxygenase hmp1. The wide substrate tolerance of the hmp5 and hmp7 implies that the reactions from DHZ to aigialomycin C can occur in any order. The steps from aigialomycin C to hypothemycin are less well established. The FAD-linked oxidoreductase hmp9 presumably catalyzes oxidation of the C-6' hydroxyl to a ketone. The timing of this oxidation is important, since the resulting enone functional group is a Michael acceptor that can react spontaneously with glutathione, an abundant metabolite in fungal cells. The glutathione S-transferase hmp2 catalyzes cis-trans isomerization of the 7',8' double bond with equilibrium favoring the trans isomer. The hpm6-encoded transporter might preferentially pump hypothemycin out of the cell relative to the trans isomer aigialomycin A. The cis-to-trans isomerization may be coupled with C-4' hydroxylation, since all known hypothemycin analogs containing the enone functional group also have hydroxyl groups at both C-4' and C-5'. The chain is Hypothemycin biosynthesis cluster protein hpm4 from Hypomyces subiculosus (Nectria subiculosa).